The following is a 259-amino-acid chain: Protein GrpE (259 aa).

Disordered regions lie at residues 1–74 (MNSD…IKGS) and 228–259 (PGPK…KDEN). Over residues 17 to 40 (SSQNNPSENSVSSPNSNESVNQVE) the composition is skewed to low complexity. 2 stretches are compositionally biased toward polar residues: residues 56-73 (VDTA…NIKG) and 240-253 (QSAS…SVDG).

The protein belongs to the GrpE family. In terms of assembly, homodimer.

The protein resides in the cytoplasm. Participates actively in the response to hyperosmotic and heat shock by preventing the aggregation of stress-denatured proteins, in association with DnaK and GrpE. It is the nucleotide exchange factor for DnaK and may function as a thermosensor. Unfolded proteins bind initially to DnaJ; upon interaction with the DnaJ-bound protein, DnaK hydrolyzes its bound ATP, resulting in the formation of a stable complex. GrpE releases ADP from DnaK; ATP binding to DnaK triggers the release of the substrate protein, thus completing the reaction cycle. Several rounds of ATP-dependent interactions between DnaJ, DnaK and GrpE are required for fully efficient folding. The protein is Protein GrpE of Prochlorococcus marinus (strain NATL2A).